The sequence spans 237 residues: Cobalt-precorrin-2 C(20)-methyltransferase (237 aa).

Belongs to the precorrin methyltransferase family. Homodimer.

The enzyme catalyses Co-precorrin-2 + S-adenosyl-L-methionine = Co-precorrin-3 + S-adenosyl-L-homocysteine + H(+). The protein operates within cofactor biosynthesis; adenosylcobalamin biosynthesis; cob(II)yrinate a,c-diamide from sirohydrochlorin (anaerobic route): step 2/10. Functionally, methylates cobalt-precorrin-2 at the C-20 position to produce cobalt-precorrin-3A in the anaerobic cobalamin biosynthesis pathway. In Salmonella typhimurium (strain LT2 / SGSC1412 / ATCC 700720), this protein is Cobalt-precorrin-2 C(20)-methyltransferase (cbiL).